The sequence spans 165 residues: NAD(P)H-quinone oxidoreductase subunit I, chloroplastic (165 aa).

2 4Fe-4S ferredoxin-type domains span residues 55-84 (GRIH…VDWE) and 95-124 (KSYS…MTEE). Residues cysteine 64, cysteine 67, cysteine 70, cysteine 74, cysteine 104, cysteine 107, cysteine 110, and cysteine 114 each coordinate [4Fe-4S] cluster.

It belongs to the complex I 23 kDa subunit family. As to quaternary structure, NDH is composed of at least 16 different subunits, 5 of which are encoded in the nucleus. [4Fe-4S] cluster serves as cofactor.

It localises to the plastid. Its subcellular location is the chloroplast thylakoid membrane. The enzyme catalyses a plastoquinone + NADH + (n+1) H(+)(in) = a plastoquinol + NAD(+) + n H(+)(out). It catalyses the reaction a plastoquinone + NADPH + (n+1) H(+)(in) = a plastoquinol + NADP(+) + n H(+)(out). In terms of biological role, NDH shuttles electrons from NAD(P)H:plastoquinone, via FMN and iron-sulfur (Fe-S) centers, to quinones in the photosynthetic chain and possibly in a chloroplast respiratory chain. The immediate electron acceptor for the enzyme in this species is believed to be plastoquinone. Couples the redox reaction to proton translocation, and thus conserves the redox energy in a proton gradient. The sequence is that of NAD(P)H-quinone oxidoreductase subunit I, chloroplastic from Psilotum nudum (Whisk fern).